The following is a 254-amino-acid chain: Pyrroloquinoline-quinone synthase (254 aa).

This sequence belongs to the PqqC family.

It catalyses the reaction 6-(2-amino-2-carboxyethyl)-7,8-dioxo-1,2,3,4,7,8-hexahydroquinoline-2,4-dicarboxylate + 3 O2 = pyrroloquinoline quinone + 2 H2O2 + 2 H2O + H(+). It functions in the pathway cofactor biosynthesis; pyrroloquinoline quinone biosynthesis. In terms of biological role, ring cyclization and eight-electron oxidation of 3a-(2-amino-2-carboxyethyl)-4,5-dioxo-4,5,6,7,8,9-hexahydroquinoline-7,9-dicarboxylic-acid to PQQ. The protein is Pyrroloquinoline-quinone synthase of Rhodopseudomonas palustris (strain ATCC BAA-98 / CGA009).